Here is a 223-residue protein sequence, read N- to C-terminus: Uridylate kinase (223 aa).

9–10 contributes to the ATP binding site; it reads GS. Glycine 43 serves as a coordination point for UMP. ATP is bound by residues glycine 44 and arginine 48. UMP-binding positions include aspartate 65 and 112–118; that span reads THPGHTT. 4 residues coordinate ATP: threonine 137, asparagine 138, tyrosine 143, and aspartate 146.

This sequence belongs to the UMP kinase family. Homohexamer.

The protein resides in the cytoplasm. The enzyme catalyses UMP + ATP = UDP + ADP. Its pathway is pyrimidine metabolism; CTP biosynthesis via de novo pathway; UDP from UMP (UMPK route): step 1/1. Its activity is regulated as follows. Inhibited by UTP. Its function is as follows. Catalyzes the reversible phosphorylation of UMP to UDP. This chain is Uridylate kinase, found in Methanopyrus kandleri (strain AV19 / DSM 6324 / JCM 9639 / NBRC 100938).